The primary structure comprises 144 residues: MASKIVMSSKTVKTSDEILCEGELEKRSDSLFQVWKKKRCVLTADRLRLFSGKTSPAKELFFHSILKVDCVEHTSKYVYFTIVTNYYKEIDFRCTVESCWNAAITMALIDFQNRRALQDFPRYRYQRSESEMPSEPGEQSALGP.

Residues 18–111 (ILCEGELEKR…AAITMALIDF (94 aa)) form the PH domain. Ser-140 carries the phosphoserine modification.

It belongs to the PHLDA2 family. Specifically expressed at high levels in extraembryonic tissues in the developing conceptus (at protein level). Expressed in placenta and yolc sac. Expressed at low levels in fetal liver and kidney.

It is found in the cytoplasm. It localises to the membrane. Its function is as follows. Plays a role in regulating placenta growth. May act via its PH domain that competes with other PH domain-containing proteins, thereby preventing their binding to membrane lipids. The chain is Pleckstrin homology-like domain family A member 2 (Phlda2) from Mus musculus (Mouse).